A 208-amino-acid chain; its full sequence is Large ribosomal subunit protein uL3 (208 aa).

The segment at 134–159 (SKFHREAGSTGHCTTPGRSFKNTTMP) is disordered. The span at 144–158 (GHCTTPGRSFKNTTM) shows a compositional bias: polar residues.

The protein belongs to the universal ribosomal protein uL3 family. In terms of assembly, part of the 50S ribosomal subunit. Forms a cluster with proteins L14 and L19.

In terms of biological role, one of the primary rRNA binding proteins, it binds directly near the 3'-end of the 23S rRNA, where it nucleates assembly of the 50S subunit. This chain is Large ribosomal subunit protein uL3, found in Treponema denticola (strain ATCC 35405 / DSM 14222 / CIP 103919 / JCM 8153 / KCTC 15104).